We begin with the raw amino-acid sequence, 185 residues long: Ribosome-recycling factor (185 aa).

Belongs to the RRF family.

The protein resides in the cytoplasm. Responsible for the release of ribosomes from messenger RNA at the termination of protein biosynthesis. May increase the efficiency of translation by recycling ribosomes from one round of translation to another. This chain is Ribosome-recycling factor, found in Bacillus cereus (strain B4264).